The primary structure comprises 1401 residues: DNA-directed RNA polymerase subunit beta' (1401 aa).

The Zn(2+) site is built by Cys-70, Cys-72, Cys-85, and Cys-88. 3 residues coordinate Mg(2+): Asp-460, Asp-462, and Asp-464. 4 residues coordinate Zn(2+): Cys-808, Cys-882, Cys-889, and Cys-892.

The protein belongs to the RNA polymerase beta' chain family. The RNAP catalytic core consists of 2 alpha, 1 beta, 1 beta' and 1 omega subunit. When a sigma factor is associated with the core the holoenzyme is formed, which can initiate transcription. Mg(2+) is required as a cofactor. Requires Zn(2+) as cofactor.

The enzyme catalyses RNA(n) + a ribonucleoside 5'-triphosphate = RNA(n+1) + diphosphate. In terms of biological role, DNA-dependent RNA polymerase catalyzes the transcription of DNA into RNA using the four ribonucleoside triphosphates as substrates. This is DNA-directed RNA polymerase subunit beta' from Legionella pneumophila (strain Corby).